Consider the following 406-residue polypeptide: MNFPIERVRADFPLLSRQVNGQPLVYLDSAASAQKPQAVIDKELHFYRDGYAAVHRGIHSLSAEATQQMEAVRTQVADFIHAASAEEIIFVRGTTEAINLVANSYGRHFLAAGDSIIITEMEHHANIVPWQMLAQDLGVEIRVWPLTATGELEITALAALIDDTTRLLAVTQVSNVLGTVNPIKDIVAQAKAAGLVVLVDGAQAVMHQPVDVQALGCDFYVFSGHKLYGPSGIGILYGKSALLQQMPPWEGGGAMIKTVSLTQGTTFADAPWRFEAGSPNTAGIMGLGAAIDYVTELGLLPIQQYEQSLMHYALAQLSQIKSLTLYGPTERAGVIAFNLGQHHAYDVGSFLDQYGIAIRTGHHCAMPLMAFYQVPSMCRASLALYNTREDVDRLVAGLQRIEKLLG.

Position 226 is an N6-(pyridoxal phosphate)lysine (Lys226). Cys364 serves as the catalytic Cysteine persulfide intermediate.

This sequence belongs to the class-V pyridoxal-phosphate-dependent aminotransferase family. Csd subfamily. As to quaternary structure, homodimer. Interacts with SufE and the SufBCD complex composed of SufB, SufC and SufD. The interaction with SufE is required to mediate the direct transfer of the sulfur atom from the S-sulfanylcysteine. It depends on pyridoxal 5'-phosphate as a cofactor.

It is found in the cytoplasm. The enzyme catalyses (sulfur carrier)-H + L-cysteine = (sulfur carrier)-SH + L-alanine. It catalyses the reaction L-selenocysteine + AH2 = hydrogenselenide + L-alanine + A + H(+). The protein operates within cofactor biosynthesis; iron-sulfur cluster biosynthesis. In terms of biological role, cysteine desulfurases mobilize the sulfur from L-cysteine to yield L-alanine, an essential step in sulfur metabolism for biosynthesis of a variety of sulfur-containing biomolecules. Component of the suf operon, which is activated and required under specific conditions such as oxidative stress and iron limitation. Acts as a potent selenocysteine lyase in vitro, that mobilizes selenium from L-selenocysteine. Selenocysteine lyase activity is however unsure in vivo. The polypeptide is Cysteine desulfurase (Yersinia pestis bv. Antiqua (strain Antiqua)).